A 1025-amino-acid chain; its full sequence is RNA cytidine acetyltransferase (1025 aa).

ATP is bound at residue 287 to 296 (GRGKSAALGL). Lysine 426 bears the N6-acetyllysine mark. Arginine 470 contacts ATP. The N-acetyltransferase domain maps to 558-753 (CLLPPVPPTQ…HSCIMLKTLT (196 aa)). Acetyl-CoA-binding positions include 629 to 631 (IAV) and 636 to 642 (QGMGYGS). The interval 702-1025 (PAERLDYLGV…KKDMKLKRKK (324 aa)) is required for localization to the nucleolus and midbody. Threonine 716 is subject to Phosphothreonine. Arginine 725 provides a ligand contact to acetyl-CoA. Residues serine 934, serine 984, and serine 987 each carry the phosphoserine modification. Positions 990–1025 (SDKKRKLEAKQEPKQSKKLKNRETKNKKDMKLKRKK) are disordered. The span at 997-1018 (EAKQEPKQSKKLKNRETKNKKD) shows a compositional bias: basic and acidic residues.

It belongs to the RNA cytidine acetyltransferase family. NAT10 subfamily. Part of the small subunit (SSU) processome, composed of more than 70 proteins and the RNA chaperone small nucleolar RNA (snoRNA) U3. Interacts with THUMPD1. Interacts with SUN1 (via N-terminus). Interacts with TERT. Post-translationally, acetylation at Lys-426 is required to activation of rRNA transcription. May be autoacetylated; however ability to autoacetylate in vivo requires additional evidences.

The protein resides in the nucleus. The protein localises to the nucleolus. It localises to the midbody. The catalysed reaction is a cytidine in 18S rRNA + acetyl-CoA + ATP + H2O = an N(4)-acetylcytidine in 18S rRNA + ADP + phosphate + CoA + H(+). The enzyme catalyses a cytidine in tRNA + acetyl-CoA + ATP + H2O = an N(4)-acetylcytidine in tRNA + ADP + phosphate + CoA + H(+). It catalyses the reaction a cytidine in mRNA + acetyl-CoA + ATP + H2O = an N(4)-acetylcytidine in mRNA + ADP + phosphate + CoA + H(+). Its activity is regulated as follows. Specifically inhibited by remodelin (4-[2-(2-cyclopentylidenehydrazinyl)-4-thiazolyl]-benzonitrile, monohydrobromide), a hydrobromide salt molecule. Remodelin can improve nuclear architecture, chromatin organization and fitness of cells from patients suffering from Hutchinson-Gilford progeria syndrome (HGPS); molecular mechanisms explaining the relation between NAT10 activity and nuclear architecture are however unclear. Functionally, RNA cytidine acetyltransferase that catalyzes the formation of N(4)-acetylcytidine (ac4C) modification on mRNAs, 18S rRNA and tRNAs. Catalyzes ac4C modification of a broad range of mRNAs, enhancing mRNA stability and translation. mRNA ac4C modification is frequently present within wobble cytidine sites and promotes translation efficiency. Mediates the formation of ac4C at position 1842 in 18S rRNA. May also catalyze the formation of ac4C at position 1337 in 18S rRNA. Required for early nucleolar cleavages of precursor rRNA at sites A0, A1 and A2 during 18S rRNA synthesis. Catalyzes the formation of ac4C in serine and leucine tRNAs. Requires the tRNA-binding adapter protein THUMPD1 for full tRNA acetyltransferase activity but not for 18S rRNA acetylation. In addition to RNA acetyltransferase activity, also able to acetylate lysine residues of proteins, such as histones, microtubules, p53/TP53 and MDM2, in vitro. The relevance of the protein lysine acetyltransferase activity is however unsure in vivo. Activates telomerase activity by stimulating the transcription of TERT, and may also regulate telomerase function by affecting the balance of telomerase subunit assembly, disassembly, and localization. Involved in the regulation of centrosome duplication by acetylating CENATAC during mitosis, promoting SASS6 proteasome degradation. Part of the small subunit (SSU) processome, first precursor of the small eukaryotic ribosomal subunit. During the assembly of the SSU processome in the nucleolus, many ribosome biogenesis factors, an RNA chaperone and ribosomal proteins associate with the nascent pre-rRNA and work in concert to generate RNA folding, modifications, rearrangements and cleavage as well as targeted degradation of pre-ribosomal RNA by the RNA exosome. The chain is RNA cytidine acetyltransferase from Homo sapiens (Human).